A 493-amino-acid chain; its full sequence is Cobyric acid synthase (493 aa).

In terms of domain architecture, GATase cobBQ-type spans 246–440 (PIDIAVIKMP…IHGVFDGVVF (195 aa)). Catalysis depends on Cys-326, which acts as the Nucleophile. His-432 is a catalytic residue.

Belongs to the CobB/CobQ family. CobQ subfamily.

It functions in the pathway cofactor biosynthesis; adenosylcobalamin biosynthesis. Catalyzes amidations at positions B, D, E, and G on adenosylcobyrinic A,C-diamide. NH(2) groups are provided by glutamine, and one molecule of ATP is hydrogenolyzed for each amidation. This is Cobyric acid synthase from Clostridium botulinum (strain Okra / Type B1).